Reading from the N-terminus, the 716-residue chain is Fatty acid oxidation complex subunit alpha (716 aa).

The tract at residues 1–189 is enoyl-CoA hydratase/isomerase; the sequence is MIYQSPTIQV…KVGAIDAVVA (189 aa). Aspartate 296 serves as a coordination point for substrate. A 3-hydroxyacyl-CoA dehydrogenase region spans residues 311–716; it reads KNIDTAAVLG…AANNGSYYQS (406 aa). NAD(+)-binding positions include methionine 324, aspartate 343, 400-402, lysine 407, and serine 429; that span reads VVE. The active-site For 3-hydroxyacyl-CoA dehydrogenase activity is the histidine 450. Asparagine 453 contributes to the NAD(+) binding site. Asparagine 500 serves as a coordination point for substrate.

In the N-terminal section; belongs to the enoyl-CoA hydratase/isomerase family. It in the C-terminal section; belongs to the 3-hydroxyacyl-CoA dehydrogenase family. As to quaternary structure, heterotetramer of two alpha chains (FadB) and two beta chains (FadA).

The catalysed reaction is a (3S)-3-hydroxyacyl-CoA + NAD(+) = a 3-oxoacyl-CoA + NADH + H(+). The enzyme catalyses a (3S)-3-hydroxyacyl-CoA = a (2E)-enoyl-CoA + H2O. It catalyses the reaction a 4-saturated-(3S)-3-hydroxyacyl-CoA = a (3E)-enoyl-CoA + H2O. It carries out the reaction (3S)-3-hydroxybutanoyl-CoA = (3R)-3-hydroxybutanoyl-CoA. The catalysed reaction is a (3Z)-enoyl-CoA = a 4-saturated (2E)-enoyl-CoA. The enzyme catalyses a (3E)-enoyl-CoA = a 4-saturated (2E)-enoyl-CoA. It participates in lipid metabolism; fatty acid beta-oxidation. In terms of biological role, involved in the aerobic and anaerobic degradation of long-chain fatty acids via beta-oxidation cycle. Catalyzes the formation of 3-oxoacyl-CoA from enoyl-CoA via L-3-hydroxyacyl-CoA. It can also use D-3-hydroxyacyl-CoA and cis-3-enoyl-CoA as substrate. This Shewanella sediminis (strain HAW-EB3) protein is Fatty acid oxidation complex subunit alpha.